The primary structure comprises 238 residues: LexA repressor (238 aa).

Positions 26 to 46 (FDEMKDALDLASKSGIHRLIT) form a DNA-binding region, H-T-H motif. Catalysis depends on for autocatalytic cleavage activity residues Ser-158 and Lys-196.

This sequence belongs to the peptidase S24 family. Homodimer.

It carries out the reaction Hydrolysis of Ala-|-Gly bond in repressor LexA.. Functionally, represses a number of genes involved in the response to DNA damage (SOS response), including recA and lexA. In the presence of single-stranded DNA, RecA interacts with LexA causing an autocatalytic cleavage which disrupts the DNA-binding part of LexA, leading to derepression of the SOS regulon and eventually DNA repair. This is LexA repressor from Rhizobium meliloti (strain 1021) (Ensifer meliloti).